The chain runs to 256 residues: Imidazole glycerol phosphate synthase subunit HisF (256 aa).

Catalysis depends on residues aspartate 11 and aspartate 130.

It belongs to the HisA/HisF family. Heterodimer of HisH and HisF.

The protein localises to the cytoplasm. The catalysed reaction is 5-[(5-phospho-1-deoxy-D-ribulos-1-ylimino)methylamino]-1-(5-phospho-beta-D-ribosyl)imidazole-4-carboxamide + L-glutamine = D-erythro-1-(imidazol-4-yl)glycerol 3-phosphate + 5-amino-1-(5-phospho-beta-D-ribosyl)imidazole-4-carboxamide + L-glutamate + H(+). The protein operates within amino-acid biosynthesis; L-histidine biosynthesis; L-histidine from 5-phospho-alpha-D-ribose 1-diphosphate: step 5/9. Functionally, IGPS catalyzes the conversion of PRFAR and glutamine to IGP, AICAR and glutamate. The HisF subunit catalyzes the cyclization activity that produces IGP and AICAR from PRFAR using the ammonia provided by the HisH subunit. This Cupriavidus metallidurans (strain ATCC 43123 / DSM 2839 / NBRC 102507 / CH34) (Ralstonia metallidurans) protein is Imidazole glycerol phosphate synthase subunit HisF.